The chain runs to 879 residues: Band 4.1-like protein 1 (879 aa).

The interval 1–64 is disordered; that stretch reads MTTETGPDSE…RPAEQSLDME (64 aa). The segment covering 17 to 35 has biased composition (low complexity); sequence ETPQQPEAAAAVTTPVTPA. At threonine 30 the chain carries Phosphothreonine. The segment covering 38 to 50 has biased composition (basic and acidic residues); the sequence is SHPETNSNEKHLT. Serine 75 carries the post-translational modification Phosphoserine. Residue threonine 79 is modified to Phosphothreonine. In terms of domain architecture, FERM spans 97 to 378; that stretch reads ATCRVTLLDA…EHHTFFRLVS (282 aa). The residue at position 343 (tyrosine 343) is a Phosphotyrosine. Phosphoserine is present on residues serine 378, serine 430, serine 437, serine 461, and serine 466. The disordered stretch occupies residues 428-501; that stretch reads SRSLDGAEFS…HKQEFLDKPE (74 aa). Residues 444–501 show a composition bias toward basic and acidic residues; the sequence is ENHDAGPDGDKREDDAESGGRRSEAEEGEVRTPTKIKELKPEQETTPRHKQEFLDKPE. At threonine 475 the chain carries Phosphothreonine. Positions 483 to 541 are spectrin--actin-binding; sequence KPEQETTPRHKQEFLDKPEDVLLKHQASINELKRTLKEPNSKLIHRDRDWERERRLPSS. A Phosphoserine modification is found at serine 510. A compositionally biased stretch (basic and acidic residues) spans 514 to 538; it reads LKRTLKEPNSKLIHRDRDWERERRL. 3 disordered regions span residues 514 to 596, 633 to 687, and 718 to 742; these read LKRT…FLKD, FEDF…STPE, and SRVS…MTTP. Residues serine 540, serine 541, serine 544, and serine 546 each carry the phosphoserine modification. A Phosphothreonine modification is found at threonine 550. A compositionally biased stretch (basic and acidic residues) spans 550–577; sequence TPEKASERAGLREGSEEKVKPPRPRAPE. 2 positions are modified to phosphoserine: serine 564 and serine 578. Position 580 is a phosphothreonine (threonine 580). Glutamate 583, glutamine 587, serine 639, serine 648, serine 650, serine 665, serine 666, aspartate 669, serine 671, serine 677, and serine 684 each carry phosphoserine. The segment covering 635 to 650 has biased composition (basic and acidic residues); sequence DFSRSLPELDRDKSDS. Threonine 685 bears the Phosphothreonine mark. Over residues 718 to 728 the composition is skewed to polar residues; it reads SRVSTADSTQV. Residues serine 721, proline 742, alanine 766, serine 782, and serine 868 each carry the phosphoserine modification. The segment at 744 to 879 is C-terminal (CTD); the sequence is CITTETISTT…EERDKKPQES (136 aa).

As to quaternary structure, interacts with AGAP2. As to expression, highest expression in brain, lower in heart and kidney. Within the brain, highest expression in cerebellum.

It is found in the cytoplasm. The protein localises to the cytoskeleton. May function to confer stability and plasticity to neuronal membrane via multiple interactions, including the spectrin-actin-based cytoskeleton, integral membrane channels and membrane-associated guanylate kinases. This chain is Band 4.1-like protein 1, found in Rattus norvegicus (Rat).